A 176-amino-acid chain; its full sequence is MEASRFIEIGLLTRPHGLKGEVCVDYYADSPFLLEGTVYLKAGRAAPRPVKVQSMRMHKGRPLVIFEGVNDRTAAELLRGHVMLVPEDTLPELDEDEVYLFELEGISVVIDESGEHLGVIERIDTDAYQEIWVIRTPQGKEVLFPAAAPFVLDIDLDSRTARIAPPPGLLDIYLSD.

Residues 95-169 enclose the PRC barrel domain; sequence EDEVYLFELE…TARIAPPPGL (75 aa).

Belongs to the RimM family. As to quaternary structure, binds ribosomal protein uS19.

The protein localises to the cytoplasm. In terms of biological role, an accessory protein needed during the final step in the assembly of 30S ribosomal subunit, possibly for assembly of the head region. Essential for efficient processing of 16S rRNA. May be needed both before and after RbfA during the maturation of 16S rRNA. It has affinity for free ribosomal 30S subunits but not for 70S ribosomes. The chain is Ribosome maturation factor RimM from Nitratidesulfovibrio vulgaris (strain ATCC 29579 / DSM 644 / CCUG 34227 / NCIMB 8303 / VKM B-1760 / Hildenborough) (Desulfovibrio vulgaris).